A 196-amino-acid chain; its full sequence is Large ribosomal subunit protein bL25 (196 aa).

This sequence belongs to the bacterial ribosomal protein bL25 family. CTC subfamily. In terms of assembly, part of the 50S ribosomal subunit; part of the 5S rRNA/L5/L18/L25 subcomplex. Contacts the 5S rRNA. Binds to the 5S rRNA independently of L5 and L18.

Its function is as follows. This is one of the proteins that binds to the 5S RNA in the ribosome where it forms part of the central protuberance. The polypeptide is Large ribosomal subunit protein bL25 (Amoebophilus asiaticus (strain 5a2)).